The primary structure comprises 611 residues: Putative clathrin assembly protein At4g02650 (611 aa).

In terms of domain architecture, ENTH spans 26–162 (GRSSSLTELE…DYRMQGRRGK (137 aa)). Disordered regions lie at residues 158 to 184 (GRRG…HRGT) and 337 to 406 (TTKS…GDLL). Residues 386–401 (METKKDVEEVVSRQDQ) are compositionally biased toward basic and acidic residues.

The protein resides in the membrane. The protein localises to the clathrin-coated pit. Its subcellular location is the golgi apparatus. It localises to the cytoplasmic vesicle. It is found in the clathrin-coated vesicle. The protein is Putative clathrin assembly protein At4g02650 of Arabidopsis thaliana (Mouse-ear cress).